A 223-amino-acid polypeptide reads, in one-letter code: 3,4-dihydroxy-2-butanone 4-phosphate synthase (223 aa).

D-ribulose 5-phosphate contacts are provided by residues 39 to 40, Asp-44, 152 to 156, and Glu-176; these read RE and RRGHT. Residue Glu-40 coordinates Mg(2+). His-155 serves as a coordination point for Mg(2+).

It belongs to the DHBP synthase family. Homodimer. Mg(2+) is required as a cofactor. Mn(2+) serves as cofactor.

It carries out the reaction D-ribulose 5-phosphate = (2S)-2-hydroxy-3-oxobutyl phosphate + formate + H(+). It participates in cofactor biosynthesis; riboflavin biosynthesis; 2-hydroxy-3-oxobutyl phosphate from D-ribulose 5-phosphate: step 1/1. Its function is as follows. Catalyzes the conversion of D-ribulose 5-phosphate to formate and 3,4-dihydroxy-2-butanone 4-phosphate. The protein is 3,4-dihydroxy-2-butanone 4-phosphate synthase of Desulfovibrio desulfuricans (strain ATCC 27774 / DSM 6949 / MB).